Consider the following 541-residue polypeptide: Glucose-6-phosphate isomerase (541 aa).

The active-site Proton donor is glutamate 346. Catalysis depends on residues histidine 377 and lysine 506.

This sequence belongs to the GPI family.

The protein localises to the cytoplasm. The catalysed reaction is alpha-D-glucose 6-phosphate = beta-D-fructose 6-phosphate. It functions in the pathway carbohydrate biosynthesis; gluconeogenesis. The protein operates within carbohydrate degradation; glycolysis; D-glyceraldehyde 3-phosphate and glycerone phosphate from D-glucose: step 2/4. Its function is as follows. Catalyzes the reversible isomerization of glucose-6-phosphate to fructose-6-phosphate. This chain is Glucose-6-phosphate isomerase, found in Rhizobium meliloti (strain 1021) (Ensifer meliloti).